Reading from the N-terminus, the 440-residue chain is Protein C-ets-1 (440 aa).

An N6-acetyllysine; alternate mark is found at Lys8 and Lys15. Glycyl lysine isopeptide (Lys-Gly) (interchain with G-Cter in SUMO2); alternate cross-links involve residues Lys8 and Lys15. Lys15 is covalently cross-linked (Glycyl lysine isopeptide (Lys-Gly) (interchain with G-Cter in SUMO); alternate). At Thr38 the chain carries Phosphothreonine; by MAPK. The PNT domain occupies 51–136 (ATFSGFTKEQ…EHLEILQKED (86 aa)). The tract at residues 130-243 (EILQKEDVKP…DNMCLGRASR (114 aa)) is activation domain; required for transcription activation. Residue Lys138 forms a Glycyl lysine isopeptide (Lys-Gly) (interchain with G-Cter in SUMO2) linkage. At Tyr223 the chain carries Phosphotyrosine. A Glycyl lysine isopeptide (Lys-Gly) (interchain with G-Cter in SUMO) cross-link involves residue Lys227. Ser251 carries the phosphoserine; by CaMK2 modification. Phosphoserine is present on Ser254. Phosphothreonine is present on Thr265. A phosphoserine mark is found at Ser267 and Ser270. A phosphoserine; by CaMK2 mark is found at Ser282 and Ser285. A helix HI-1 region spans residues 304-312 (FKDYVRDRA). Lys305 is modified (N6-acetyllysine). Positions 323 to 330 (AAALAGYT) are helix HI-2. A DNA-binding region (ETS) is located at residues 335–415 (IQLWQFLLEL…AGKRYVYRFV (81 aa)). The helix H4 stretch occupies residues 418 to 422 (LQSLL). A helix H5 region spans residues 426–432 (PEELHAM).

The protein belongs to the ETS family. In terms of assembly, binds DNA as a homodimer; homodimerization is required for transcription activation. Interacts with MAF and MAFB. Interacts with PAX5; the interaction alters DNA-binding properties. Interacts with DAXX. Interacts with UBE2I. Interacts with SP100; the interaction is direct and modulates ETS1 transcriptional activity. Post-translationally, phosphorylation at Ser-251, Ser-282 and Ser-285 by CaMK2/CaMKII in response to calcium signaling decreases affinity for DNA: an increasing number of phosphoserines causes DNA-binding to become progressively weaker. Sumoylated on Lys-15 and Lys-227, preferentially with SUMO2; which inhibits transcriptional activity. In terms of processing, ubiquitinated; which induces proteasomal degradation.

It is found in the nucleus. The protein resides in the cytoplasm. Its activity is regulated as follows. Autoinhibited by a module composed of four alpha helices (HI-1, HI-2, H4, and H5) that flank the DNA-binding ETS domain, reducing the affinity for DNA. Phosphorylation by CaMK2/CaMKII in response to calcium signaling decreases affinity for DNA. Transcription factor. Directly controls the expression of cytokine and chemokine genes in a wide variety of different cellular contexts. May control the differentiation, survival and proliferation of lymphoid cells. May also regulate angiogenesis through regulation of expression of genes controlling endothelial cell migration and invasion. The polypeptide is Protein C-ets-1 (Ets1) (Mus musculus (Mouse)).